Reading from the N-terminus, the 489-residue chain is Oxysterol-binding protein-related protein 1B (489 aa).

This sequence belongs to the OSBP family. Expressed at low levels in flowers.

Its function is as follows. May be involved in the transport of sterols. The polypeptide is Oxysterol-binding protein-related protein 1B (ORP1B) (Arabidopsis thaliana (Mouse-ear cress)).